A 1734-amino-acid chain; its full sequence is Complement C4-A (1734 aa).

An N-terminal signal peptide occupies residues 1–19 (MRLLWGLAWVFSFCASSLQ). A disulfide bond links C66 and C95. N224 carries N-linked (GlcNAc...) asparagine glycosylation. A disulfide bond links C633 and C667. Residues 674–677 (RQKR) constitute a propeptide that is removed on maturation. 3 disulfides stabilise this stretch: C700–C726, C701–C733, and C714–C734. In terms of domain architecture, Anaphylatoxin-like spans 700-734 (CCQDGMTKLPMKRTCEQRAARVPQQACREPFLSCC). N-linked (GlcNAc...) asparagine glycans are attached at residues N743 and N859. Positions 1002 to 1005 (CAEQ) form a cross-link, isoglutamyl cysteine thioester (Cys-Gln). Residues N1128 and N1383 are each glycosylated (N-linked (GlcNAc...) asparagine). Sulfotyrosine is present on Y1409. Residues 1437 to 1443 (RRSRRRR) constitute a propeptide that is removed on maturation. Cystine bridges form between C1461-C1525, C1573-C1578, C1585-C1663, C1608-C1732, and C1708-C1717. Residues 1585–1732 (CPRLLRSLER…FLMEFSSRGC (148 aa)) enclose the NTR domain.

In terms of assembly, in absence of complement activation, circulates in blood as a disulfide-linked trimer of an alpha, beta and gamma chain. Complement C4b is composed of Complement C4b-A, Complement C4 beta and Complement C4 gamma chains that are associated via disulfide bonds. Non-enzymatic component of the C3 convertase, also named C4bC2b, composed of the serine protease complement C2b (C2), as well as complement C4b. Non-enzymatic component of the C5 convertase, also named C4bC2bC3b, composed of the serine protease complement C2b (C2), complement C3b, as well as complement C4b. Prior to secretion, the single-chain precursor is enzymatically cleaved by plasminogen (PLG) to yield non-identical chains alpha, beta and gamma. During activation of the complement systems, the alpha chain is cleaved into C4a and C4b by different proteases depending on the complement pathway: C4b stays linked to the beta and gamma chains, while C4a is released in the plasma. The alpha chain is cleaved by C1S to generate C4a and C4b following activation by the classical complement system. The alpha chain is cleaved to generate C4a and C4b by MASP2 following activation by the lectin complement system. The alpha chain is cleaved by GZMK to generate C4a and C4b following activation by the GZMK complement system. Further degradation of C4b by C1 into the inactive fragments C4c and C4d blocks the generation of C3 convertase. The proteolytic cleavages often are incomplete so that many structural forms can be found in plasma. Post-translationally, upon activation, the internal thioester bond reacts with carbohydrate antigens on the target surface to form amide or ester bonds, leading to covalent association with the surface of pathogens. In terms of processing, complement C4b interacts with complement C3b via a thioester linkage. N- and O-glycosylated. O-glycosylated with a core 1 or possibly core 8 glycan.

Its subcellular location is the secreted. It localises to the synapse. The protein localises to the cell projection. The protein resides in the axon. It is found in the dendrite. Its subcellular location is the cell surface. Its activity is regulated as follows. Specifically inhibited by nanobody hC4Nb8, inhibiting the classical complement pathway. Precursor of non-enzymatic components of the classical, lectin and GZMK complement pathways, which consist in a cascade of proteins that leads to phagocytosis and breakdown of pathogens and signaling that strengthens the adaptive immune system. In terms of biological role, non-enzymatic component of C3 and C5 convertases. Generated following cleavage by complement proteases (C1S, MASP2 or GZMK, depending on the complement pathway), it covalently attaches to the surface of pathogens, where it acts as an opsonin that marks the surface of antigens for removal. It then recruits the serine protease complement C2b to form the C3 and C5 convertases, which cleave and activate C3 and C5, respectively, the next components of the complement pathways. Complement C4b-A isotype is responsible for effective binding to form amide bonds with immune aggregates or protein antigens, while complement C4b-B isotype catalyzes the transacylation of the thioester carbonyl group to form ester bonds with carbohydrate antigens. Its function is as follows. Putative humoral mediator released following cleavage by complement proteases (C1S, MASP2 or GZMK, depending on the complement pathway). While it is strongly similar to anaphylatoxins, its role is unclear. Was reported to act as a mediator of local inflammatory process; however these effects were probably due to contamination with C3a and/C5a anaphylatoxins in biological assays. In Mus musculus (Mouse), this protein is Complement C4-A.